Reading from the N-terminus, the 408-residue chain is uncharacterized protein (408 aa).

2 disordered regions span residues 184–206 (DENN…SILF) and 254–317 (NNKT…SSDS). Residues 187–206 (NNNSNNNNNNNSNNNSSILF) show a composition bias toward low complexity.

This is an uncharacterized protein from Dictyostelium discoideum (Social amoeba).